The sequence spans 187 residues: Ribonuclease HII (187 aa).

The 187-residue stretch at 1–187 folds into the RNase H type-2 domain; sequence MICGTDEAGR…NPVKRLLANL (187 aa). Residues aspartate 6, glutamate 7, and aspartate 98 each contribute to the a divalent metal cation site.

Belongs to the RNase HII family. Mn(2+) serves as cofactor. Requires Mg(2+) as cofactor.

It localises to the cytoplasm. It catalyses the reaction Endonucleolytic cleavage to 5'-phosphomonoester.. Its function is as follows. Endonuclease that specifically degrades the RNA of RNA-DNA hybrids. This is Ribonuclease HII from Idiomarina loihiensis (strain ATCC BAA-735 / DSM 15497 / L2-TR).